The primary structure comprises 531 residues: MLSRSGSQGRRCLATLSQIAYQRNDDDEEEAARERRRRARQERLRQKQEEESLGQVTDQVEAHVQNSAPDEESKPATANAQVEGDEEAALLERLARREERRQKRLQEALERQKEFDPTITDGSLSVPSRRMQNNSAENETAEGEEKGESRSGRYEMEETEVVITSYQKNSYQDAEDKKKEEKEEEEEEEKLKGGNLGENQIKDEKIKKDKEPKEEVKNFLDRKKGFTEVKAQNGEFMTHKLKQTENAFSPSRSGGRASGDKEAEGAPQVEAGKRLEELRRRRGETESEEFEKLKQKQQEAALELEELKKKREERRKVLEEEEQRRKQEEADRKAREEEEKRRLKEEIERRRAEAAEKRQKMPEDGLSEDKKPFKCFTPKGSSLKIEERAEFLNKSVQKSGVKSTHQAAVVSKIDSRLEQYTNAIEGTKASKPMKPAASDLPVPAEGVRNIKSMWEKGSVFSSPSASGTPNKETAGLKVGVSSRINEWLTKSPDGNKSPAPKPSDLRPGDVSGKRNLWEKQSVDKVTSPTKV.

The tract at residues 20–200 (AYQRNDDDEE…LKGGNLGENQ (181 aa)) is myosin and calmodulin-binding. Residues 21-379 (YQRNDDDEEE…KKPFKCFTPK (359 aa)) are disordered. Residues 41-50 (QERLRQKQEE) show a composition bias toward basic and acidic residues. Over residues 54 to 68 (GQVTDQVEAHVQNSA) the composition is skewed to polar residues. The span at 93–116 (RLARREERRQKRLQEALERQKEFD) shows a compositional bias: basic and acidic residues. Residues 120–133 (TDGSLSVPSRRMQN) are compositionally biased toward polar residues. Serine 123 is modified (phosphoserine). Residues 143–156 (GEEKGESRSGRYEM) are compositionally biased toward basic and acidic residues. The segment covering 162 to 172 (VITSYQKNSYQ) has biased composition (polar residues). The segment covering 200–227 (QIKDEKIKKDKEPKEEVKNFLDRKKGFT) has biased composition (basic and acidic residues). Serine 249 carries the post-translational modification Phosphoserine; by CDK1. Basic and acidic residues-rich tracts occupy residues 271–297 (AGKRLEELRRRRGETESEEFEKLKQKQ) and 305–372 (EELK…DKKP). The segment at 303 to 360 (ELEELKKKREERRKVLEEEEQRRKQEEADRKAREEEEKRRLKEEIERRRAEAAEKRQK) is tropomyosin-binding. A Phosphoserine modification is found at serine 382. Residue lysine 384 forms a Glycyl lysine isopeptide (Lys-Gly) (interchain with G-Cter in SUMO2) linkage. Positions 392–424 (LNKSVQKSGVKSTHQAAVVSKIDSRLEQYTNAI) are strong actin-binding. Position 395 is a phosphoserine (serine 395). The tract at residues 402-412 (KSTHQAAVVSK) is tropomyosin-binding. The calmodulin-binding stretch occupies residues 454-460 (WEKGSVF). Residues 458-531 (SVFSSPSASG…VDKVTSPTKV (74 aa)) form a disordered region. Over residues 459-471 (VFSSPSASGTPNK) the composition is skewed to polar residues. Position 462 is a phosphoserine; by CDK1 (serine 462). Threonine 468 carries the post-translational modification Phosphothreonine; by CDK1. Phosphoserine; by CDK1 occurs at positions 491 and 497. The segment covering 503–522 (SDLRPGDVSGKRNLWEKQSV) has biased composition (basic and acidic residues). Positions 506 to 531 (RPGDVSGKRNLWEKQSVDKVTSPTKV) are weak actin-binding. Serine 527 bears the Phosphoserine; by CDK1 mark.

Belongs to the caldesmon family. Post-translationally, in non-muscle cells, phosphorylation by CDK1 during mitosis causes caldesmon to dissociate from microfilaments. Phosphorylation reduces caldesmon binding to actin, myosin, and calmodulin as well as its inhibition of actomyosin ATPase activity. Phosphorylation also occurs in both quiescent and dividing smooth muscle cells with similar effects on the interaction with actin and calmodulin and on microfilaments reorganization. CDK1-mediated phosphorylation promotes Schwann cell migration during peripheral nerve regeneration. In terms of tissue distribution, high-molecular-weight caldesmon (h-caldesmon) is predominantly expressed in smooth muscles, whereas low-molecular-weight caldesmon (l-caldesmon) is widely distributed in non-muscle tissues and cells. Not expressed in skeletal muscle or heart.

It is found in the cytoplasm. Its subcellular location is the cytoskeleton. The protein localises to the myofibril. The protein resides in the stress fiber. Actin- and myosin-binding protein implicated in the regulation of actomyosin interactions in smooth muscle and nonmuscle cells (could act as a bridge between myosin and actin filaments). Stimulates actin binding of tropomyosin which increases the stabilization of actin filament structure. In muscle tissues, inhibits the actomyosin ATPase by binding to F-actin. This inhibition is attenuated by calcium-calmodulin and is potentiated by tropomyosin. Interacts with actin, myosin, two molecules of tropomyosin and with calmodulin. Also plays an essential role during cellular mitosis and receptor capping. Involved in Schwann cell migration during peripheral nerve regeneration. This chain is Non-muscle caldesmon (Cald1), found in Rattus norvegicus (Rat).